We begin with the raw amino-acid sequence, 228 residues long: Large ribosomal subunit protein bL25 (228 aa).

The interval 196–228 (EEAAVAEAQSAESAEGKAEAEAEATNEKNKSEA) is disordered. Residues 209 to 228 (AEGKAEAEAEATNEKNKSEA) show a composition bias toward basic and acidic residues.

This sequence belongs to the bacterial ribosomal protein bL25 family. CTC subfamily. Part of the 50S ribosomal subunit; part of the 5S rRNA/L5/L18/L25 subcomplex. Contacts the 5S rRNA. Binds to the 5S rRNA independently of L5 and L18.

Functionally, this is one of the proteins that binds to the 5S RNA in the ribosome where it forms part of the central protuberance. The sequence is that of Large ribosomal subunit protein bL25 from Methylorubrum extorquens (strain PA1) (Methylobacterium extorquens).